We begin with the raw amino-acid sequence, 256 residues long: 5-keto-4-deoxy-D-glucarate aldolase (256 aa).

His50 functions as the Proton acceptor in the catalytic mechanism. Gln151 is a binding site for substrate. Glu153 is a Mg(2+) binding site. Residues Ser178 and Asp179 each contribute to the substrate site. Asp179 is a binding site for Mg(2+).

The protein belongs to the HpcH/HpaI aldolase family. KDGluc aldolase subfamily. Homohexamer; trimer of dimers. It depends on Mg(2+) as a cofactor.

The enzyme catalyses 5-dehydro-4-deoxy-D-glucarate = 2-hydroxy-3-oxopropanoate + pyruvate. It catalyses the reaction 2-dehydro-3-deoxy-D-glucarate = 2-hydroxy-3-oxopropanoate + pyruvate. It functions in the pathway carbohydrate acid metabolism; galactarate degradation; D-glycerate from galactarate: step 2/3. In terms of biological role, catalyzes the reversible retro-aldol cleavage of both 5-keto-4-deoxy-D-glucarate and 2-keto-3-deoxy-D-glucarate to pyruvate and tartronic semialdehyde. The sequence is that of 5-keto-4-deoxy-D-glucarate aldolase from Salmonella arizonae (strain ATCC BAA-731 / CDC346-86 / RSK2980).